The following is a 153-amino-acid chain: Nascent polypeptide-associated complex subunit beta (153 aa).

2 disordered regions span residues 1 to 40 (MSDV…ADDK) and 126 to 153 (LQKE…PKVE). Over residues 23 to 32 (TPRRKVKRAP) the composition is skewed to basic residues. The region spanning 36 to 101 (GADDKKLQLA…GEDKELTELV (66 aa)) is the NAC-A/B domain. A compositionally biased stretch (acidic residues) spans 132–147 (EDDDEIPDLVEGENFE).

The protein belongs to the NAC-beta family. In terms of assembly, part of the nascent polypeptide-associated complex (NAC), consisting of EGD2 and EGD1. NAC associates with ribosomes via EGD1.

The protein resides in the cytoplasm. It localises to the nucleus. Its function is as follows. Component of the nascent polypeptide-associated complex (NAC), a dynamic component of the ribosomal exit tunnel, protecting the emerging polypeptides from interaction with other cytoplasmic proteins to ensure appropriate nascent protein targeting. The NAC complex also promotes mitochondrial protein import by enhancing productive ribosome interactions with the outer mitochondrial membrane and blocks the inappropriate interaction of ribosomes translating non-secretory nascent polypeptides with translocation sites in the membrane of the endoplasmic reticulum. EGD1 may act as a transcription factor that exert a negative effect on the expression of several genes that are transcribed by RNA polymerase II. The sequence is that of Nascent polypeptide-associated complex subunit beta (EGD1) from Gibberella zeae (strain ATCC MYA-4620 / CBS 123657 / FGSC 9075 / NRRL 31084 / PH-1) (Wheat head blight fungus).